Here is a 573-residue protein sequence, read N- to C-terminus: Potassium-transporting ATPase potassium-binding subunit (573 aa).

Transmembrane regions (helical) follow at residues 6 to 26, 66 to 86, 135 to 155, 177 to 197, 257 to 277, 283 to 303, 382 to 402, 428 to 448, 493 to 513, and 537 to 557; these read ILFALFIVTIALITKPLGSYI, FFSLVSFSVMAFIFVLVILLL, ALAVQNFVSAAVGLCVAIALI, IFWILLPISIVIAIVYIFQGV, IQMVSIFAIAAALTYTFGKWV, GWLIFGVMLVLFIISLVVMTI, IFGGVGAGFYGFFMFLMLAVF, MFALLISPCCVLVFTGLAAVI, ITIALSMLIGRFGVIFAVIML, and FIFAILVFFTILLIGGLTIFP.

It belongs to the KdpA family. In terms of assembly, the system is composed of three essential subunits: KdpA, KdpB and KdpC.

It is found in the cell inner membrane. Part of the high-affinity ATP-driven potassium transport (or Kdp) system, which catalyzes the hydrolysis of ATP coupled with the electrogenic transport of potassium into the cytoplasm. This subunit binds the periplasmic potassium ions and delivers the ions to the membrane domain of KdpB through an intramembrane tunnel. This Francisella tularensis subsp. novicida (strain U112) protein is Potassium-transporting ATPase potassium-binding subunit.